Consider the following 518-residue polypeptide: Cytochrome P450 monooxygenase COX1 (518 aa).

A helical transmembrane segment spans residues 7-25 (VLIALSSIVVAYFVKTALA). 5 N-linked (GlcNAc...) asparagine glycosylation sites follow: Asn48, Asn100, Asn292, Asn302, and Asn351. Cys450 is a heme binding site. An N-linked (GlcNAc...) asparagine glycan is attached at Asn457.

Belongs to the cytochrome P450 family. Heme serves as cofactor.

It is found in the membrane. Its pathway is secondary metabolite biosynthesis. Its function is as follows. Cytochrome P450 monooxygenase; part of the gene cluster that mediates the biosynthesis of alpha-cuprenene and oxidized derivatives. The alpha-cuprenene synthase COP6 is the only sesquiterpene synthase identified in C.cinereus that appears to be part of a biosynthetic gene cluster and is highly specific since it catalyzes the cyclization of (2E,6E)-farnesyl diphosphate into only one product, alpha-cuprenene. The cytochrome P450 monooxygenase COX2 then oxidizes the cyclohexadiene ring of alpha-cuprenene at positions 1 and 4, yielding first alpha-cuparene, followed by alpha-cuparophenol and a further yet unidentified compound resulting from one additional oxidation step. The cytochrome P450 monooxygenase COX1 then likely catalyzes the oxidation at position 9 of the pentane ring of alpha-cuprenene to give the corresponding hydroxy or ketone derivatives. This chain is Cytochrome P450 monooxygenase COX1, found in Coprinopsis cinerea (strain Okayama-7 / 130 / ATCC MYA-4618 / FGSC 9003) (Inky cap fungus).